We begin with the raw amino-acid sequence, 915 residues long: DNA (cytosine-5)-methyltransferase 3 (915 aa).

A compositionally biased stretch (low complexity) spans 1–14 (MAPSSPSSARPTRA). 2 disordered regions span residues 1-107 (MAPS…AEEQ) and 152-171 (HSNWPKRYERSTAANKPEED). The span at 21–30 (AMAEEIHQNQ) shows a compositional bias: basic and acidic residues. Basic residues predominate over residues 42 to 57 (AKRRRKAASSGKKPKP). The span at 71–80 (KKGETEKTEP) shows a compositional bias: basic and acidic residues. Residues 81–107 (VVDDVCAEEPDEEELAMGEEEAEAEEQ) show a composition bias toward acidic residues. The BAH domain occupies 188–313 (IVYCLGDDVY…VAYSTFANIS (126 aa)). The span at 315 to 328 (ENGQSGSETASGIS) shows a compositional bias: polar residues. The interval 315 to 338 (ENGQSGSETASGISSDDAGLETSS) is disordered. Positions 345 to 876 (ATLLDLYSGC…YCLGQAYLGE (532 aa)) constitute an SAM-dependent MTase C5-type domain. The region spanning 445 to 508 (FVVQKLIGIR…EGRKRKILPL (64 aa)) is the Chromo domain. Cys-521 is an active-site residue.

Belongs to the class I-like SAM-binding methyltransferase superfamily. C5-methyltransferase family.

The protein resides in the nucleus. The enzyme catalyses a 2'-deoxycytidine in DNA + S-adenosyl-L-methionine = a 5-methyl-2'-deoxycytidine in DNA + S-adenosyl-L-homocysteine + H(+). Functionally, may be involved in the CpXpG methylation and in gene silencing. The protein is DNA (cytosine-5)-methyltransferase 3 (DMT105) of Zea mays (Maize).